A 363-amino-acid polypeptide reads, in one-letter code: Ribosomal RNA large subunit methyltransferase M (363 aa).

Residues Ser-190, Cys-223 to Gly-226, Asp-242, Asp-262, and Asp-279 contribute to the S-adenosyl-L-methionine site. The active-site Proton acceptor is Lys-308.

Belongs to the class I-like SAM-binding methyltransferase superfamily. RNA methyltransferase RlmE family. RlmM subfamily. As to quaternary structure, monomer.

It localises to the cytoplasm. The catalysed reaction is cytidine(2498) in 23S rRNA + S-adenosyl-L-methionine = 2'-O-methylcytidine(2498) in 23S rRNA + S-adenosyl-L-homocysteine + H(+). Its function is as follows. Catalyzes the 2'-O-methylation at nucleotide C2498 in 23S rRNA. The chain is Ribosomal RNA large subunit methyltransferase M from Vibrio atlanticus (strain LGP32) (Vibrio splendidus (strain Mel32)).